Here is a 344-residue protein sequence, read N- to C-terminus: MRNVQAQPLVSPTEPMIDPFGRAVTYLRVSVTDRCDFRCTYCMAEHMTFLPKKDLLTLEELDRLCSVFIEKGVRKLRLTGGEPLVRKNIMHLIGNLSRHLKSGALDELTLTTNGSQLARFAGELADCGVRRINVSLDTLNPEKFRTITRWGDLSRVLEGIDAAQKAGIHVKINAVALKDFNDAEIPELIRWAHGRGMDVTLIETMPMGEIEFDRTDQYLPLSQVRADLASQFTLADIPYRTGGPARYVTISETGGRLGFITPMTYNFCESCNRVRLTCTGMLYMCLGQNDDADLRKALRESESDEHLSQAIDEAISRKPKGHDFIIDREHNRPSVARHMSLTGG.

Residues 19 to 245 (PFGRAVTYLR…DIPYRTGGPA (227 aa)) form the Radical SAM core domain. Arg-28 provides a ligand contact to GTP. [4Fe-4S] cluster is bound by residues Cys-35 and Cys-39. Residue Tyr-41 coordinates S-adenosyl-L-methionine. Cys-42 is a binding site for [4Fe-4S] cluster. Residue Arg-77 coordinates GTP. Gly-81 is a binding site for S-adenosyl-L-methionine. Position 111 (Thr-111) interacts with GTP. An S-adenosyl-L-methionine-binding site is contributed by Ser-135. Lys-171 lines the GTP pocket. Met-205 provides a ligand contact to S-adenosyl-L-methionine. [4Fe-4S] cluster contacts are provided by Cys-268 and Cys-271. Residue 273–275 (RVR) participates in GTP binding. [4Fe-4S] cluster is bound at residue Cys-285.

This sequence belongs to the radical SAM superfamily. MoaA family. Monomer and homodimer. [4Fe-4S] cluster serves as cofactor.

It catalyses the reaction GTP + AH2 + S-adenosyl-L-methionine = (8S)-3',8-cyclo-7,8-dihydroguanosine 5'-triphosphate + 5'-deoxyadenosine + L-methionine + A + H(+). It functions in the pathway cofactor biosynthesis; molybdopterin biosynthesis. Catalyzes the cyclization of GTP to (8S)-3',8-cyclo-7,8-dihydroguanosine 5'-triphosphate. This Brucella melitensis biotype 2 (strain ATCC 23457) protein is GTP 3',8-cyclase.